A 104-amino-acid polypeptide reads, in one-letter code: MILTTTNTIEGHTITAYKGIVVGEAIMGANIVRDFFASVTDVIGGRSGAYEDKLQDARTEAMAEIEERAAALGANAVVGIDLDYEVTGDSMLMVSVSGTAVTIT.

It belongs to the UPF0145 family.

The sequence is that of UPF0145 protein RD1_2695 from Roseobacter denitrificans (strain ATCC 33942 / OCh 114) (Erythrobacter sp. (strain OCh 114)).